A 98-amino-acid polypeptide reads, in one-letter code: NADH-ubiquinone oxidoreductase chain 4L (98 aa).

The next 3 membrane-spanning stretches (helical) occupy residues 1-21 (MTLIHMNILMAFSMSLVGLLM), 29-49 (ALLCLEGMMLSLFVLATLTIL), and 61-81 (IILLVFAACEAAIGLALLVMV).

This sequence belongs to the complex I subunit 4L family. Core subunit of respiratory chain NADH dehydrogenase (Complex I) which is composed of 45 different subunits.

The protein localises to the mitochondrion inner membrane. The enzyme catalyses a ubiquinone + NADH + 5 H(+)(in) = a ubiquinol + NAD(+) + 4 H(+)(out). Its function is as follows. Core subunit of the mitochondrial membrane respiratory chain NADH dehydrogenase (Complex I) which catalyzes electron transfer from NADH through the respiratory chain, using ubiquinone as an electron acceptor. Part of the enzyme membrane arm which is embedded in the lipid bilayer and involved in proton translocation. The sequence is that of NADH-ubiquinone oxidoreductase chain 4L (MT-ND4L) from Balaenoptera bonaerensis (Antarctic minke whale).